We begin with the raw amino-acid sequence, 396 residues long: MLQSIVLSVCMFMLHTVAASGPQSYQKLDFTNVGFTGSYVDVNKFKDITNNESCTCEVGDRVWFSGKNAPLADYLSVHFRGPLKLKQFAFYTSPGFTVNNSRSSSDWNRLAYYESSSKTADNVTFLNHGGEASPCLGNALSYASSNGTGSASEATVLADGTLISSDQEYIIYSNVSCPKSGYDKGCGVYRSGIPAYYGYGGTTKMFLFEFEMPTETEKNSSSIGYYDLPAIWLLNDHIARTSQYPTNANCSCWASGCGEYDIFEAMNGTEKNHLYSTFHTFQGIEDLGTGIQSYGYITRNTTGTMKGGVVFDSSGNVVSFISDATPFNGTVSADTVNDLLAAIPENETYSSQLMSISATAPSTTSKSNGVALTKMQNGVWYYILAIFTAFTQVVLI.

Residues 1-19 (MLQSIVLSVCMFMLHTVAA) form the signal peptide. N-linked (GlcNAc...) asparagine glycans are attached at residues Asn51, Asn99, Asn122, Asn146, Asn174, Asn219, and Asn249. The ExDxxE motif motif lies at 259–264 (EYDIFE). 4 N-linked (GlcNAc...) asparagine glycosylation sites follow: Asn267, Asn300, Asn328, and Asn346. Residue Asn368 is the site of GPI-anchor amidated asparagine attachment. Positions 369–396 (GVALTKMQNGVWYYILAIFTAFTQVVLI) are cleaved as a propeptide — removed in mature form.

It belongs to the PGA52 family. Post-translationally, extensively N-glycosylated.

It localises to the cell membrane. It carries out the reaction Hydrolysis of (1-&gt;3)-beta-D-glucosidic linkages in (1-&gt;3)-beta-D-glucans.. Probable circularly permuted 1,3-beta-glucanase involved in cell wall modification through beta-1,3-glucan network alterations such as increased branching or remodeling. The protein is Probable circularly permuted 1,3-beta-glucanase YJL171C (TOH1) of Saccharomyces cerevisiae (strain ATCC 204508 / S288c) (Baker's yeast).